The primary structure comprises 526 residues: Rho guanine nucleotide exchange factor 3 (526 aa).

The disordered stretch occupies residues 20 to 40 (ELPPASGPAKDAEEPSNKRVK). Phosphoserine occurs at positions 47 and 70. One can recognise a DH domain in the interval 122–304 (KRQEAIFELS…QGIVAEINTK (183 aa)). In terms of domain architecture, PH spans 291 to 449 (INIIQGIVAE…WLNCIRQAKE (159 aa)). The interval 464–526 (EGSFLNPTTG…GNSRHGESNV (63 aa)) is disordered. Positions 466-475 (SFLNPTTGSR) are enriched in polar residues.

In terms of assembly, interacts with RHOA and RHOB. As to expression, widely expressed. Highest levels are found in adult brain and skeletal muscle. Lower levels are found in heart and kidney.

The protein resides in the cytoplasm. In terms of biological role, acts as a guanine nucleotide exchange factor (GEF) for RhoA and RhoB GTPases. The polypeptide is Rho guanine nucleotide exchange factor 3 (ARHGEF3) (Homo sapiens (Human)).